The following is a 415-amino-acid chain: Tyrosine--tRNA ligase (415 aa).

Residues 54–63 (PTGSNIHLGH) carry the 'HIGH' region motif. A 'KMSKS' region motif is present at residues 248 to 252 (KMSKS). ATP is bound at residue Lys-251. The 64-residue stretch at 351 to 414 (AKAFYLFSAV…LGKKTFRRLV (64 aa)) folds into the S4 RNA-binding domain.

This sequence belongs to the class-I aminoacyl-tRNA synthetase family. TyrS type 2 subfamily. In terms of assembly, homodimer.

It is found in the cytoplasm. The catalysed reaction is tRNA(Tyr) + L-tyrosine + ATP = L-tyrosyl-tRNA(Tyr) + AMP + diphosphate + H(+). Functionally, catalyzes the attachment of tyrosine to tRNA(Tyr) in a two-step reaction: tyrosine is first activated by ATP to form Tyr-AMP and then transferred to the acceptor end of tRNA(Tyr). The protein is Tyrosine--tRNA ligase of Synechococcus sp. (strain CC9605).